A 531-amino-acid polypeptide reads, in one-letter code: UDP-glucuronosyltransferase 1A5 (531 aa).

The N-terminal stretch at 1-25 is a signal peptide; the sequence is MGLHVTLQGLAGLLLLLYALPWAEG. N-linked (GlcNAc...) asparagine glycans are attached at residues N116, N131, N139, N293, and N431. The chain crosses the membrane as a helical span at residues 489–505; that stretch reads VIGFLLAIVLTVVFIVY.

This sequence belongs to the UDP-glycosyltransferase family. Homodimer. Homooligomer. Interacts with UGT1A1, UGT1A3, UGT1A4, UGT1A6, UGT1A7, UGT1A8, UGT1A9 and UGT1A10 to form heterodimers.

It is found in the endoplasmic reticulum membrane. The enzyme catalyses glucuronate acceptor + UDP-alpha-D-glucuronate = acceptor beta-D-glucuronoside + UDP + H(+). It carries out the reaction zolasartan + UDP-alpha-D-glucuronate = zolarsartan-1-N-beta-D-glucuronide + UDP. In terms of biological role, UDP-glucuronosyltransferase (UGT) that catalyzes phase II biotransformation reactions in which lipophilic substrates are conjugated with glucuronic acid to increase the metabolite's water solubility, thereby facilitating excretion into either the urine or bile. Essential for the elimination and detoxification of drugs, xenobiotics and endogenous compounds. Involved in the glucuronidation of the AGTR1 angiotensin receptor antagonist zolarsatan, a drug which can inhibit the effect of angiotensin II. The sequence is that of UDP-glucuronosyltransferase 1A5 from Rattus norvegicus (Rat).